An 80-amino-acid polypeptide reads, in one-letter code: uncharacterized protein (80 aa).

4Fe-4S ferredoxin-type domains are found at residues 21–49 (KIIEIDYNKCKNCLSCYRVCKNNVFAIKN) and 50–80 (NRVVVKNENNCTKCGECLKVCRYGAIILYDA). Positions 30, 33, 36, 40, 60, 63, 66, and 70 each coordinate [4Fe-4S] cluster.

[4Fe-4S] cluster serves as cofactor.

This is an uncharacterized protein from Methanocaldococcus jannaschii (strain ATCC 43067 / DSM 2661 / JAL-1 / JCM 10045 / NBRC 100440) (Methanococcus jannaschii).